The following is a 538-amino-acid chain: ATP synthase subunit beta, mitochondrial (538 aa).

215–222 serves as a coordination point for ATP; the sequence is GGAGVGKT.

The protein belongs to the ATPase alpha/beta chains family. Subunit of the F-type ATPase which has 2 components, CF(1) - the catalytic core - and CF(0) - the membrane proton channel. Interacts (via N-terminus) with lov-1 (via PLAT domain). In terms of tissue distribution, expressed in three categories of adult male sensory neurons: tail ray B neurons, HOB hook neuron and head cephalic (CEM) neurons.

The protein resides in the cell projection. The protein localises to the cilium. Its subcellular location is the mitochondrion. It localises to the mitochondrion inner membrane. The catalysed reaction is ATP + H2O + 4 H(+)(in) = ADP + phosphate + 5 H(+)(out). Its function is as follows. Mitochondrial membrane ATP synthase (F(1)F(0) ATP synthase or Complex V) produces ATP from ADP in the presence of a proton gradient across the membrane which is generated by electron transport complexes of the respiratory chain. F-type ATPases consist of two structural domains, F(1) - containing the extramembraneous catalytic core, and F(0) - containing the membrane proton channel, linked together by a central stalk and a peripheral stalk. During catalysis, ATP synthesis in the catalytic domain of F(1) is coupled via a rotary mechanism of the central stalk subunits to proton translocation. Subunits alpha and beta form the catalytic core in F(1). Rotation of the central stalk against the surrounding subunits leads to hydrolysis of ATP in three separate catalytic sites on the beta subunits. Required during male mating behavior for the response to hermaphrodite contact, acting with lov-1 and pkd-2. May be involved in polycystin signaling. The sequence is that of ATP synthase subunit beta, mitochondrial from Caenorhabditis elegans.